Consider the following 125-residue polypeptide: S-adenosylmethionine decarboxylase proenzyme (125 aa).

The active-site Schiff-base intermediate with substrate; via pyruvic acid is Ser71. Ser71 carries the pyruvic acid (Ser); by autocatalysis modification. His76 acts as the Proton acceptor; for processing activity in catalysis. Cys91 acts as the Proton donor; for catalytic activity in catalysis.

The protein belongs to the prokaryotic AdoMetDC family. Type 1 subfamily. In terms of assembly, heterotetramer of two alpha and two beta chains arranged as a dimer of alpha/beta heterodimers. Pyruvate serves as cofactor. In terms of processing, is synthesized initially as an inactive proenzyme. Formation of the active enzyme involves a self-maturation process in which the active site pyruvoyl group is generated from an internal serine residue via an autocatalytic post-translational modification. Two non-identical subunits are generated from the proenzyme in this reaction, and the pyruvate is formed at the N-terminus of the alpha chain, which is derived from the carboxyl end of the proenzyme. The post-translation cleavage follows an unusual pathway, termed non-hydrolytic serinolysis, in which the side chain hydroxyl group of the serine supplies its oxygen atom to form the C-terminus of the beta chain, while the remainder of the serine residue undergoes an oxidative deamination to produce ammonia and the pyruvoyl group blocking the N-terminus of the alpha chain.

It catalyses the reaction S-adenosyl-L-methionine + H(+) = S-adenosyl 3-(methylsulfanyl)propylamine + CO2. Its pathway is amine and polyamine biosynthesis; S-adenosylmethioninamine biosynthesis; S-adenosylmethioninamine from S-adenosyl-L-methionine: step 1/1. Its function is as follows. Catalyzes the decarboxylation of S-adenosylmethionine to S-adenosylmethioninamine (dcAdoMet), the propylamine donor required for the synthesis of the polyamines spermine and spermidine from the diamine putrescine. This Pyrobaculum aerophilum (strain ATCC 51768 / DSM 7523 / JCM 9630 / CIP 104966 / NBRC 100827 / IM2) protein is S-adenosylmethionine decarboxylase proenzyme.